A 162-amino-acid polypeptide reads, in one-letter code: Early E1A 18 kDa protein (162 aa).

Residues E134 to C162 form a disordered region. A compositionally biased stretch (polar residues) spans D150–C162.

This Tree shrew adenovirus serotype 1 (TSAdV-1) protein is Early E1A 18 kDa protein.